The chain runs to 456 residues: Putative alanyl-tRNA editing protein alaX (456 aa).

Zn(2+) contacts are provided by histidine 125, histidine 129, cysteine 240, and histidine 244.

Belongs to the class-II aminoacyl-tRNA synthetase family. Alax-L subfamily. Zn(2+) serves as cofactor.

Its function is as follows. May function in trans to edit the amino acid moiety from incorrectly charged tRNA(Ala). The chain is Putative alanyl-tRNA editing protein alaX from Saccharomyces cerevisiae (strain ATCC 204508 / S288c) (Baker's yeast).